The primary structure comprises 104 residues: Hydrogen cyanide synthase subunit HcnA (104 aa).

Residues 16–97 (ADMTIHLNGQ…GMRVETESNR (82 aa)) enclose the 2Fe-2S ferredoxin-type domain. [2Fe-2S] cluster is bound by residues Cys60, Cys65, Cys68, and Cys81.

Heterotrimer of HcnA, HcnB and HcnC.

It localises to the cell membrane. It catalyses the reaction glycine + 2 A = hydrogen cyanide + 2 AH2 + CO2. Oxygen is necessary for cyanogenesis. Activated by succinate, glycine methyl ester, glucose and D,L-methionine in addition to glycine. Phenazine methosulfate, methylene blue, 2,6-dichlorophenolindophenol (DCIP) and ferricyanide can replace oxygen for the reaction. Inhibited by pyrrolnitrin and acriflavine at 1 mM concentration. In terms of biological role, a three-component membrane-bound flavoenzyme that catalyzes the formation of hydrogen cyanide, a secondary metabolite, by transfer of electrons to a cyanide-resistant branch of the aerobic respiratory chain. The protein is Hydrogen cyanide synthase subunit HcnA of Pseudomonas aeruginosa (strain ATCC 15692 / DSM 22644 / CIP 104116 / JCM 14847 / LMG 12228 / 1C / PRS 101 / PAO1).